The chain runs to 318 residues: NADH-ubiquinone oxidoreductase chain 1 (318 aa).

8 helical membrane-spanning segments follow: residues 2–22 (LLTN…FLTL), 69–89 (LMFI…WAPL), 102–122 (ILFI…SGWA), 147–167 (AIIL…TLTI), 172–192 (MWLI…TLAE), 231–251 (IILM…NPLF), 253–273 (ELHT…FLWI), and 294–314 (LPLT…LAGI).

This sequence belongs to the complex I subunit 1 family.

It is found in the mitochondrion inner membrane. The enzyme catalyses a ubiquinone + NADH + 5 H(+)(in) = a ubiquinol + NAD(+) + 4 H(+)(out). Core subunit of the mitochondrial membrane respiratory chain NADH dehydrogenase (Complex I) that is believed to belong to the minimal assembly required for catalysis. Complex I functions in the transfer of electrons from NADH to the respiratory chain. The immediate electron acceptor for the enzyme is believed to be ubiquinone. This is NADH-ubiquinone oxidoreductase chain 1 (MT-ND1) from Bradypus variegatus (Brown-throated three-fingered sloth).